Here is a 449-residue protein sequence, read N- to C-terminus: Phosphoglucosamine mutase (449 aa).

S100 (phosphoserine intermediate) is an active-site residue. Residues S100, D240, D242, and D244 each coordinate Mg(2+). The residue at position 100 (S100) is a Phosphoserine.

This sequence belongs to the phosphohexose mutase family. Requires Mg(2+) as cofactor. In terms of processing, activated by phosphorylation.

The enzyme catalyses alpha-D-glucosamine 1-phosphate = D-glucosamine 6-phosphate. Its function is as follows. Catalyzes the conversion of glucosamine-6-phosphate to glucosamine-1-phosphate. This chain is Phosphoglucosamine mutase, found in Clostridium novyi (strain NT).